A 469-amino-acid polypeptide reads, in one-letter code: Diaminobutyrate--2-oxoglutarate transaminase (469 aa).

K290 carries the N6-(pyridoxal phosphate)lysine modification.

It belongs to the class-III pyridoxal-phosphate-dependent aminotransferase family. It depends on pyridoxal 5'-phosphate as a cofactor.

The protein localises to the cytoplasm. The enzyme catalyses L-2,4-diaminobutanoate + 2-oxoglutarate = L-aspartate 4-semialdehyde + L-glutamate. In terms of biological role, involved in the degradation of ectoine, which allows H.elongata to utilize ectoine as both a carbon and a nitrogen source for growth. Probably catalyzes the conversion of L-2,4-diaminobutyrate (DABA) to L-aspartate beta-semialdehyde (ASA) by transamination with 2-oxoglutarate. The chain is Diaminobutyrate--2-oxoglutarate transaminase from Halomonas elongata (strain ATCC 33173 / DSM 2581 / NBRC 15536 / NCIMB 2198 / 1H9).